The sequence spans 471 residues: MENFKHLPEPFRIRVIEPVKRTTRAYREEAIIKSGMNPFLLDSEDVFIDLLTDSGTGAVTQSMQAAMMRGDEAYSGSRSYYALAESVKNIFGYQYTIPTHQGRGAEQIYIPVLIKKREQEKGLDRSKMVAFSNYFFDTTQGHSQINGCTVRNVYIKEAFDTGVRYDFKGNFDLEGLERGIEEVGPNNVPYIVATITSNSAGGQPVSLANLKAMYSIAKKYDIPVVMDSARFAENAYFIKQREAEYKDWTIEQITRETYKYADMLAMSAKKDAMVPMGGLLCMKDDSFFDVYTECRTLCVVQEGFPTYGGLEGGAMERLAVGLYDGMNLDWLAYRIAQVQYLVDGLEEIDVVCQQAGGHAAFVDAGKLLPHIPADQFPAQALACELYKVAGIRAVEIGSFLLGRDPKTGKQLPCPAELLRLTIPRATYTQTHMDFIIEAFKHVKENAANIKGLTFTYEPKVLRHFTAKLKEV.

Residues Lys5, Lys115, and Lys156 each carry the N6-acetyllysine modification. Residue Lys270 is modified to N6-(pyridoxal phosphate)lysine. Lys450 carries the N6-acetyllysine modification.

The protein belongs to the beta-eliminating lyase family. In terms of assembly, homotetramer. Pyridoxal 5'-phosphate is required as a cofactor.

The catalysed reaction is L-tryptophan + H2O = indole + pyruvate + NH4(+). It participates in amino-acid degradation; L-tryptophan degradation via pyruvate pathway; indole and pyruvate from L-tryptophan: step 1/1. In Escherichia coli O9:H4 (strain HS), this protein is Tryptophanase.